Consider the following 197-residue polypeptide: Putative NADH dehydrogenase/NAD(P)H nitroreductase Lcho_1290 (197 aa).

It belongs to the nitroreductase family. HadB/RutE subfamily. Requires FMN as cofactor.

The polypeptide is Putative NADH dehydrogenase/NAD(P)H nitroreductase Lcho_1290 (Leptothrix cholodnii (strain ATCC 51168 / LMG 8142 / SP-6) (Leptothrix discophora (strain SP-6))).